A 469-amino-acid chain; its full sequence is 3-isopropylmalate dehydratase large subunit (469 aa).

[4Fe-4S] cluster is bound by residues cysteine 349, cysteine 410, and cysteine 413.

The protein belongs to the aconitase/IPM isomerase family. LeuC type 1 subfamily. Heterodimer of LeuC and LeuD. It depends on [4Fe-4S] cluster as a cofactor.

The enzyme catalyses (2R,3S)-3-isopropylmalate = (2S)-2-isopropylmalate. It functions in the pathway amino-acid biosynthesis; L-leucine biosynthesis; L-leucine from 3-methyl-2-oxobutanoate: step 2/4. In terms of biological role, catalyzes the isomerization between 2-isopropylmalate and 3-isopropylmalate, via the formation of 2-isopropylmaleate. The sequence is that of 3-isopropylmalate dehydratase large subunit from Aromatoleum aromaticum (strain DSM 19018 / LMG 30748 / EbN1) (Azoarcus sp. (strain EbN1)).